The sequence spans 500 residues: Oogenesin-3 (500 aa).

Residues 116–143 (RCKLRVLKWRDEQHDFCGIWPGSHEAED) form an LRR 1; degenerate repeat. The LRR 2; degenerate repeat unit spans residues 198 to 222 (HLLCRKLVIETLTKDTVIEIFKIVN). An LRR 3; degenerate repeat occupies 223-248 (ADCIQELELYSLCLEDLAFLNPYLRQ). The LRR 4; degenerate repeat unit spans residues 249-285 (MDNLLELTLDHVTDSLSMGDSEMCEEEMITLVSQLPT). LRR repeat units lie at residues 286–311 (FPCL…LRCL), 312–343 (KKPL…FELK), 344–367 (CLYL…LESV), 368–395 (RHTL…ALSQ), and 396–420 (CSHL…LLQH).

Belongs to the PRAME family. In terms of tissue distribution, expressed in ovary, specifically in oocytes. Detected in follicles with two layers of granulosa cells, and are present in early as well as large antral follicles.

The polypeptide is Oogenesin-3 (Mus musculus (Mouse)).